Consider the following 1703-residue polypeptide: Protein TIC 214 (1703 aa).

Transmembrane regions (helical) follow at residues Tyr-39–Leu-61, Gly-67–Cys-87, Leu-90–Tyr-110, Leu-138–Leu-158, Phe-174–Ile-194, and Phe-220–Ile-240. 2 disordered regions span residues Gly-615 to Glu-643 and Thr-1431 to Lys-1494. Residues Lys-618–Phe-660 are a coiled coil. The span at Gly-619–Glu-643 shows a compositional bias: basic and acidic residues.

It belongs to the TIC214 family. As to quaternary structure, part of the Tic complex.

It is found in the plastid. Its subcellular location is the chloroplast inner membrane. In terms of biological role, involved in protein precursor import into chloroplasts. May be part of an intermediate translocation complex acting as a protein-conducting channel at the inner envelope. This Psilotum nudum (Whisk fern) protein is Protein TIC 214.